A 220-amino-acid polypeptide reads, in one-letter code: MTGISLGVNDIRNLSIFLGVSNKILKVSLGTEKVWPAFTPVLTTFATVGTYTYNIPDGAKFIDVILLGGGGGGKGMALADGWGRGGDAGSWAIVTLERGVHIPLSTKTITGLVGAGGAAGAGSVFSGKAGGPGGNTTASAVGWSGLTATGGPGGSVIDILSVAGKSPGDRTYNDQLYIGGAQQNSAGGNGNAPGGGGAGAQVSAQSGGAGARGQAWFFAY.

The disordered stretch occupies residues 184–205 (NSAGGNGNAPGGGGAGAQVSAQ). Over residues 187 to 199 (GGNGNAPGGGGAG) the composition is skewed to gly residues.

The protein is Gene 32 protein (32) of Mycobacterium (Mycobacteriophage L5).